Consider the following 990-residue polypeptide: Leucine--tRNA ligase (990 aa).

Positions 74 to 85 match the 'HIGH' region motif; that stretch reads PYPSGKGLHVGH. The tract at residues 573–602 is disordered; sequence LPINLPDVPDYSPKTFDPEDAESDPEAPLS. The 'KMSKS' region motif lies at 763–767; it reads KMGKS. Lys-766 lines the ATP pocket.

The protein belongs to the class-I aminoacyl-tRNA synthetase family.

Its subcellular location is the cytoplasm. The catalysed reaction is tRNA(Leu) + L-leucine + ATP = L-leucyl-tRNA(Leu) + AMP + diphosphate. In Bifidobacterium adolescentis (strain ATCC 15703 / DSM 20083 / NCTC 11814 / E194a), this protein is Leucine--tRNA ligase.